We begin with the raw amino-acid sequence, 284 residues long: MLRVAVPNKGSLSEAASAMLSEAGYRQRRDSRELVMVDPDNDIEFFFLRPRDIAVYVGRGTLDVGITGRDLLLDAEVEAEELLPLGFAASTFRFAGPVGDFASAEELEGKRLATSYDGLLRGYLAERGINAKVVRLDGAVESSVRLGVADAIADVVETGNTLKAAGMEIFGDPILKSEAVLIRRAGGTTNGTAKEVDVLIRRLQGVLVARQYVLMDYDIRKELVEKAAALTPGLESPTVSPLRDSDWVAVRSMVPKKETNRIMDELYDLGARAILVSSIHACRI.

Belongs to the ATP phosphoribosyltransferase family. Long subfamily. It depends on Mg(2+) as a cofactor.

The protein resides in the cytoplasm. It catalyses the reaction 1-(5-phospho-beta-D-ribosyl)-ATP + diphosphate = 5-phospho-alpha-D-ribose 1-diphosphate + ATP. Its pathway is amino-acid biosynthesis; L-histidine biosynthesis; L-histidine from 5-phospho-alpha-D-ribose 1-diphosphate: step 1/9. Feedback inhibited by histidine. Its function is as follows. Catalyzes the condensation of ATP and 5-phosphoribose 1-diphosphate to form N'-(5'-phosphoribosyl)-ATP (PR-ATP). Has a crucial role in the pathway because the rate of histidine biosynthesis seems to be controlled primarily by regulation of HisG enzymatic activity. This is ATP phosphoribosyltransferase from Pseudarthrobacter chlorophenolicus (strain ATCC 700700 / DSM 12829 / CIP 107037 / JCM 12360 / KCTC 9906 / NCIMB 13794 / A6) (Arthrobacter chlorophenolicus).